We begin with the raw amino-acid sequence, 229 residues long: Enolase-phosphatase E1 (229 aa).

This sequence belongs to the HAD-like hydrolase superfamily. MasA/MtnC family. In terms of assembly, monomer. The cofactor is Mg(2+).

The catalysed reaction is 5-methylsulfanyl-2,3-dioxopentyl phosphate + H2O = 1,2-dihydroxy-5-(methylsulfanyl)pent-1-en-3-one + phosphate. It participates in amino-acid biosynthesis; L-methionine biosynthesis via salvage pathway; L-methionine from S-methyl-5-thio-alpha-D-ribose 1-phosphate: step 3/6. Its pathway is amino-acid biosynthesis; L-methionine biosynthesis via salvage pathway; L-methionine from S-methyl-5-thio-alpha-D-ribose 1-phosphate: step 4/6. Its function is as follows. Bifunctional enzyme that catalyzes the enolization of 2,3-diketo-5-methylthiopentyl-1-phosphate (DK-MTP-1-P) into the intermediate 2-hydroxy-3-keto-5-methylthiopentenyl-1-phosphate (HK-MTPenyl-1-P), which is then dephosphorylated to form the acireductone 1,2-dihydroxy-3-keto-5-methylthiopentene (DHK-MTPene). The sequence is that of Enolase-phosphatase E1 from Yersinia pseudotuberculosis serotype O:1b (strain IP 31758).